The sequence spans 101 residues: Phosphoribosyl-ATP pyrophosphatase (101 aa).

The protein belongs to the PRA-PH family.

The protein resides in the cytoplasm. It catalyses the reaction 1-(5-phospho-beta-D-ribosyl)-ATP + H2O = 1-(5-phospho-beta-D-ribosyl)-5'-AMP + diphosphate + H(+). Its pathway is amino-acid biosynthesis; L-histidine biosynthesis; L-histidine from 5-phospho-alpha-D-ribose 1-diphosphate: step 2/9. The polypeptide is Phosphoribosyl-ATP pyrophosphatase (Natronomonas pharaonis (strain ATCC 35678 / DSM 2160 / CIP 103997 / JCM 8858 / NBRC 14720 / NCIMB 2260 / Gabara) (Halobacterium pharaonis)).